The chain runs to 494 residues: Sulfate adenylyltransferase subunit 1 (494 aa).

Residues 28–242 (TRPLRLITCG…TLELATVRST (215 aa)) form the tr-type G domain. The segment at 37 to 44 (GSVDDGKS) is G1. 37–44 (GSVDDGKS) provides a ligand contact to GTP. The G2 stretch occupies residues 94–98 (GITID). The G3 stretch occupies residues 115–118 (DTPG). GTP-binding positions include 115–119 (DTPGH) and 170–173 (NKID). The interval 170-173 (NKID) is G4. A G5 region spans residues 207 to 209 (SAL).

Belongs to the TRAFAC class translation factor GTPase superfamily. Classic translation factor GTPase family. CysN/NodQ subfamily. In terms of assembly, heterodimer composed of CysD, the smaller subunit, and CysN.

The enzyme catalyses sulfate + ATP + H(+) = adenosine 5'-phosphosulfate + diphosphate. The protein operates within sulfur metabolism; hydrogen sulfide biosynthesis; sulfite from sulfate: step 1/3. Its function is as follows. With CysD forms the ATP sulfurylase (ATPS) that catalyzes the adenylation of sulfate producing adenosine 5'-phosphosulfate (APS) and diphosphate, the first enzymatic step in sulfur assimilation pathway. APS synthesis involves the formation of a high-energy phosphoric-sulfuric acid anhydride bond driven by GTP hydrolysis by CysN coupled to ATP hydrolysis by CysD. In Agrobacterium fabrum (strain C58 / ATCC 33970) (Agrobacterium tumefaciens (strain C58)), this protein is Sulfate adenylyltransferase subunit 1.